A 592-amino-acid polypeptide reads, in one-letter code: Arginine--tRNA ligase (592 aa).

The 'HIGH' region motif lies at 123–133 (PNTNKPLHLGH).

Belongs to the class-I aminoacyl-tRNA synthetase family. As to quaternary structure, monomer.

Its subcellular location is the cytoplasm. It catalyses the reaction tRNA(Arg) + L-arginine + ATP = L-arginyl-tRNA(Arg) + AMP + diphosphate. In Flavobacterium johnsoniae (strain ATCC 17061 / DSM 2064 / JCM 8514 / BCRC 14874 / CCUG 350202 / NBRC 14942 / NCIMB 11054 / UW101) (Cytophaga johnsonae), this protein is Arginine--tRNA ligase.